Consider the following 582-residue polypeptide: Frizzled-10 (582 aa).

Positions Met-1–Ala-21 are cleaved as a signal peptide. Topologically, residues Ile-22 to Arg-226 are extracellular. Residues Pro-30–Ala-151 form the FZ domain. 5 disulfide bridges follow: Cys-35–Cys-96, Cys-43–Cys-89, Cys-80–Cys-118, Cys-107–Cys-148, and Cys-111–Cys-135. An N-linked (GlcNAc...) asparagine glycan is attached at Asn-49. Residues Asn-153–Gly-189 are disordered. An N-linked (GlcNAc...) asparagine glycan is attached at Asn-154. Residues Phe-227–Val-247 form a helical membrane-spanning segment. Residues Leu-248 to Pro-263 lie on the Cytoplasmic side of the membrane. A helical membrane pass occupies residues Ile-264–Ala-284. Residues Gly-285–Leu-312 lie on the Extracellular side of the membrane. A helical transmembrane segment spans residues Val-313–Leu-333. The Cytoplasmic segment spans residues Thr-334–Ser-352. Residues Ser-353–Met-373 traverse the membrane as a helical segment. The Extracellular segment spans residues Arg-374 to Ala-394. The helical transmembrane segment at Leu-395–Leu-415 threads the bilayer. Over Ser-416–Arg-444 the chain is Cytoplasmic. The helical transmembrane segment at Ile-445–Tyr-465 threads the bilayer. The Extracellular segment spans residues Glu-466–Glu-503. Asn-486 is a glycosylation site (N-linked (GlcNAc...) asparagine). A helical membrane pass occupies residues Val-504 to Trp-524. Topologically, residues Thr-525–Val-582 are cytoplasmic. A Lys-Thr-X-X-X-Trp motif, mediates interaction with the PDZ domain of Dvl family members motif is present at residues Lys-527–Trp-532. The segment at Ala-561–Val-582 is disordered. The PDZ-binding signature appears at Ala-580 to Val-582.

It belongs to the G-protein coupled receptor Fz/Smo family. In terms of assembly, interacts with MYOC. Interacts with WNT7B. Ubiquitinated by ZNRF3, leading to its degradation by the proteasome.

It is found in the cell membrane. Receptor for Wnt proteins. Functions in the canonical Wnt/beta-catenin signaling pathway. The canonical Wnt/beta-catenin signaling pathway leads to the activation of disheveled proteins, inhibition of GSK-3 kinase, nuclear accumulation of beta-catenin and activation of Wnt target genes. A second signaling pathway involving PKC and calcium fluxes has been seen for some family members, but it is not yet clear if it represents a distinct pathway or if it can be integrated in the canonical pathway, as PKC seems to be required for Wnt-mediated inactivation of GSK-3 kinase. Both pathways seem to involve interactions with G-proteins. May be involved in transduction and intercellular transmission of polarity information during tissue morphogenesis and/or in differentiated tissues. The sequence is that of Frizzled-10 (Fzd10) from Mus musculus (Mouse).